Here is a 495-residue protein sequence, read N- to C-terminus: UDP-N-acetylmuramate--L-alanine ligase (495 aa).

153-159 is an ATP binding site; that stretch reads GTHGKTT.

Belongs to the MurCDEF family.

The protein resides in the cytoplasm. It catalyses the reaction UDP-N-acetyl-alpha-D-muramate + L-alanine + ATP = UDP-N-acetyl-alpha-D-muramoyl-L-alanine + ADP + phosphate + H(+). It functions in the pathway cell wall biogenesis; peptidoglycan biosynthesis. In terms of biological role, cell wall formation. The protein is UDP-N-acetylmuramate--L-alanine ligase of Gloeothece citriformis (strain PCC 7424) (Cyanothece sp. (strain PCC 7424)).